A 539-amino-acid polypeptide reads, in one-letter code: GMP synthase [glutamine-hydrolyzing] (539 aa).

The 199-residue stretch at 4-202 (KVLILDFGSQ…VLEIAGAKPD (199 aa)) folds into the Glutamine amidotransferase type-1 domain. The active-site Nucleophile is the cysteine 81. Residues histidine 176 and glutamate 178 contribute to the active site. The GMPS ATP-PPase domain occupies 203-395 (WVMRDHIDEA…LGLPHEMVYR (193 aa)). 230–236 (SGGVDSS) lines the ATP pocket.

Homodimer.

The enzyme catalyses XMP + L-glutamine + ATP + H2O = GMP + L-glutamate + AMP + diphosphate + 2 H(+). Its pathway is purine metabolism; GMP biosynthesis; GMP from XMP (L-Gln route): step 1/1. Catalyzes the synthesis of GMP from XMP. This is GMP synthase [glutamine-hydrolyzing] from Ralstonia pickettii (strain 12J).